Reading from the N-terminus, the 298-residue chain is Zinc transport system membrane protein TroC (298 aa).

Transmembrane regions (helical) follow at residues 16–36, 41–61, 68–88, 97–117, 144–164, 187–207, 229–249, and 255–275; these read VVLGTLFLGLGSGLVGSFAVL, LFGDAVSHATLPGIVIAFLLT, ILLLGAALSGLVGTVVMLMVM, GAQGIVLGVFLGFGFLLLTHV, VLLIIAMEVVIGLLVLLFWKE, FMLTALIVVAVVVGVQAVGVI, VLCALAALFGGVSGVSGSVVS, and LSTGPVIVLVLTGIALVSIML.

The protein belongs to the ABC-3 integral membrane protein family.

Its subcellular location is the cell membrane. Functionally, part of an ATP-driven transport system TroABCD for zinc. The protein is Zinc transport system membrane protein TroC (troC) of Treponema pallidum (strain Nichols).